A 123-amino-acid polypeptide reads, in one-letter code: Large ribosomal subunit protein uL14 (123 aa).

Belongs to the universal ribosomal protein uL14 family. As to quaternary structure, part of the 50S ribosomal subunit. Forms a cluster with proteins L3 and L19. In the 70S ribosome, L14 and L19 interact and together make contacts with the 16S rRNA in bridges B5 and B8.

Functionally, binds to 23S rRNA. Forms part of two intersubunit bridges in the 70S ribosome. The sequence is that of Large ribosomal subunit protein uL14 from Escherichia coli O6:K15:H31 (strain 536 / UPEC).